The following is a 113-amino-acid chain: UPF0321 protein C569.02c (113 aa).

Residues 1–17 (MLLLFCICCAFIKLVLA) form the signal peptide. 3 N-linked (GlcNAc...) asparagine glycosylation sites follow: Asn-20, Asn-39, and Asn-65.

It belongs to the UPF0321 family.

The polypeptide is UPF0321 protein C569.02c (Schizosaccharomyces pombe (strain 972 / ATCC 24843) (Fission yeast)).